The primary structure comprises 458 residues: MSSGRIVQIIGAVIDVEFPRDQVPNVYEALKVQGAETTLEVQQQLGDGVVRTIAMGSTEGLKRGLDVNSTGKAISVPVGKATLGRIMDVLGNPIDEAGPIGEEEQWEIHRAAPSYAEQAGGNDLLETGIKVIDLVCPFAKGGKVGLFGGAGVGKTVNMMELIRNIAIEHSGYSVFAGVGERTREGNDFYHEMKDSNVLDKVALVYGQMNEPPGNRLRVALTGLTMAEKFRDEGRDVLLFVDNIYRYTLAGTEVSALLGRMPSAVGYQPTLAEEMGVLQERITSTKKGSITSIQAVYVPADDLTDPSPATTFAHLDATVVLSRDIASLGIYPAVDPLDSTSRQLDPNVIGQEHYETARGVQYVLQRYKELKDIIAILGMDELSEDDKLLVARARKIQRFLSQPFFVAEVFTGAPGKYVSLKDTIAGFSGILKGDYDHLPEQAFYMVGGIDEAIEKAKKL.

An ATP-binding site is contributed by 148 to 155 (GGAGVGKT).

This sequence belongs to the ATPase alpha/beta chains family. As to quaternary structure, F-type ATPases have 2 components, CF(1) - the catalytic core - and CF(0) - the membrane proton channel. CF(1) has five subunits: alpha(3), beta(3), gamma(1), delta(1), epsilon(1). CF(0) has three main subunits: a(1), b(2) and c(9-12). The alpha and beta chains form an alternating ring which encloses part of the gamma chain. CF(1) is attached to CF(0) by a central stalk formed by the gamma and epsilon chains, while a peripheral stalk is formed by the delta and b chains.

It is found in the cell inner membrane. It carries out the reaction ATP + H2O + 4 H(+)(in) = ADP + phosphate + 5 H(+)(out). Produces ATP from ADP in the presence of a proton gradient across the membrane. The catalytic sites are hosted primarily by the beta subunits. This Ectopseudomonas mendocina (strain ymp) (Pseudomonas mendocina) protein is ATP synthase subunit beta.